A 364-amino-acid chain; its full sequence is Phosphate acyltransferase (364 aa).

The segment at 343-364 (IRTSGRSGGKSKSSAAREDGAA) is disordered.

Belongs to the PlsX family. As to quaternary structure, homodimer. Probably interacts with PlsY.

It is found in the cytoplasm. It carries out the reaction a fatty acyl-[ACP] + phosphate = an acyl phosphate + holo-[ACP]. It functions in the pathway lipid metabolism; phospholipid metabolism. Its function is as follows. Catalyzes the reversible formation of acyl-phosphate (acyl-PO(4)) from acyl-[acyl-carrier-protein] (acyl-ACP). This enzyme utilizes acyl-ACP as fatty acyl donor, but not acyl-CoA. The sequence is that of Phosphate acyltransferase from Novosphingobium aromaticivorans (strain ATCC 700278 / DSM 12444 / CCUG 56034 / CIP 105152 / NBRC 16084 / F199).